The following is a 122-amino-acid chain: Vitelline membrane protein 15a-3 (122 aa).

An N-terminal signal peptide occupies residues 1–17 (MNKFIILALFAVAAASA). Pro residues predominate over residues 21–49 (YPPPPPKPYHAPPPPPHHAHPPPPPPPPA). 2 disordered regions span residues 21-63 (YPPP…APVV) and 103-122 (PAPA…QFEE). Residues 69–109 (HAPHAKCGANLLVGCAPSVAHAPCVPLHGHGHGYPAPAPHY) enclose the VM domain.

It belongs to the vitelline membrane protein family. Expressed in the middle and posterior regions of the follicle cells.

It localises to the secreted. This is Vitelline membrane protein 15a-3 from Aedes aegypti (Yellowfever mosquito).